The primary structure comprises 197 residues: Small ribosomal subunit protein eS1 (197 aa).

Belongs to the eukaryotic ribosomal protein eS1 family.

This Sulfolobus acidocaldarius (strain ATCC 33909 / DSM 639 / JCM 8929 / NBRC 15157 / NCIMB 11770) protein is Small ribosomal subunit protein eS1.